The primary structure comprises 125 residues: Ribosome-binding factor A (125 aa).

This sequence belongs to the RbfA family. Monomer. Binds 30S ribosomal subunits, but not 50S ribosomal subunits or 70S ribosomes.

The protein localises to the cytoplasm. One of several proteins that assist in the late maturation steps of the functional core of the 30S ribosomal subunit. Associates with free 30S ribosomal subunits (but not with 30S subunits that are part of 70S ribosomes or polysomes). Required for efficient processing of 16S rRNA. May interact with the 5'-terminal helix region of 16S rRNA. This Wigglesworthia glossinidia brevipalpis protein is Ribosome-binding factor A.